Consider the following 219-residue polypeptide: ATP-dependent Clp protease proteolytic subunit 3 (219 aa).

The active-site Nucleophile is serine 112. Histidine 137 is an active-site residue.

The protein belongs to the peptidase S14 family. In terms of assembly, fourteen ClpP subunits assemble into 2 heptameric rings which stack back to back to give a disk-like structure with a central cavity, resembling the structure of eukaryotic proteasomes.

The protein resides in the cytoplasm. The catalysed reaction is Hydrolysis of proteins to small peptides in the presence of ATP and magnesium. alpha-casein is the usual test substrate. In the absence of ATP, only oligopeptides shorter than five residues are hydrolyzed (such as succinyl-Leu-Tyr-|-NHMec, and Leu-Tyr-Leu-|-Tyr-Trp, in which cleavage of the -Tyr-|-Leu- and -Tyr-|-Trp bonds also occurs).. Cleaves peptides in various proteins in a process that requires ATP hydrolysis. Has a chymotrypsin-like activity. Plays a major role in the degradation of misfolded proteins. The polypeptide is ATP-dependent Clp protease proteolytic subunit 3 (Streptomyces avermitilis (strain ATCC 31267 / DSM 46492 / JCM 5070 / NBRC 14893 / NCIMB 12804 / NRRL 8165 / MA-4680)).